Here is a 647-residue protein sequence, read N- to C-terminus: DNA mismatch repair protein MutL (647 aa).

It belongs to the DNA mismatch repair MutL/HexB family.

In terms of biological role, this protein is involved in the repair of mismatches in DNA. It is required for dam-dependent methyl-directed DNA mismatch repair. May act as a 'molecular matchmaker', a protein that promotes the formation of a stable complex between two or more DNA-binding proteins in an ATP-dependent manner without itself being part of a final effector complex. In Bacillus cereus (strain Q1), this protein is DNA mismatch repair protein MutL.